Consider the following 653-residue polypeptide: DNA mismatch repair protein MutL (653 aa).

Residues 368-413 are disordered; it reads EVSQVAEPEGKTDITNKKETETKEKAEKKENKQEEKEEKTSAPEYV. The span at 375-408 shows a compositional bias: basic and acidic residues; that stretch reads PEGKTDITNKKETETKEKAEKKENKQEEKEEKTS.

The protein belongs to the DNA mismatch repair MutL/HexB family.

In terms of biological role, this protein is involved in the repair of mismatches in DNA. It is required for dam-dependent methyl-directed DNA mismatch repair. May act as a 'molecular matchmaker', a protein that promotes the formation of a stable complex between two or more DNA-binding proteins in an ATP-dependent manner without itself being part of a final effector complex. The polypeptide is DNA mismatch repair protein MutL (Lactobacillus delbrueckii subsp. bulgaricus (strain ATCC 11842 / DSM 20081 / BCRC 10696 / JCM 1002 / NBRC 13953 / NCIMB 11778 / NCTC 12712 / WDCM 00102 / Lb 14)).